The primary structure comprises 337 residues: Monoacylglycerol lipase abhd6-A (337 aa).

Residues 1 to 19 are Extracellular-facing; it reads MDLDVLNMFLVAGGTLLVP. A helical; Signal-anchor for type II membrane protein transmembrane segment spans residues 20-42; the sequence is ILAFVTSFLLWPAALIKIYYWYW. At 43–337 the chain is on the cytoplasmic side; that stretch reads RRALGMQVKF…QSTENNKKHE (295 aa). The region spanning 73 to 313 is the AB hydrolase-1 domain; that stretch reads SVLMLHGFSA…CGHSVVMERP (241 aa). Catalysis depends on serine 148, which acts as the Nucleophile. Residues aspartate 278 and histidine 306 each act as charge relay system in the active site.

Belongs to the AB hydrolase superfamily.

The protein resides in the late endosome membrane. The protein localises to the lysosome membrane. It localises to the mitochondrion membrane. It catalyses the reaction Hydrolyzes glycerol monoesters of long-chain fatty acids.. The enzyme catalyses 1-octanoylglycerol + H2O = octanoate + glycerol + H(+). It carries out the reaction 1-decanoylglycerol + H2O = decanoate + glycerol + H(+). The catalysed reaction is 1-dodecanoylglycerol + H2O = dodecanoate + glycerol + H(+). It catalyses the reaction 1-tetradecanoylglycerol + H2O = tetradecanoate + glycerol + H(+). The enzyme catalyses 2-hexadecanoylglycerol + H2O = glycerol + hexadecanoate + H(+). It carries out the reaction 2-(9Z-octadecenoyl)-glycerol + H2O = glycerol + (9Z)-octadecenoate + H(+). The catalysed reaction is 1-(9Z-octadecenoyl)-glycerol + H2O = glycerol + (9Z)-octadecenoate + H(+). It catalyses the reaction 2-(9Z,12Z-octadecadienoyl)-glycerol + H2O = (9Z,12Z)-octadecadienoate + glycerol + H(+). The enzyme catalyses 2-(5Z,8Z,11Z,14Z-eicosatetraenoyl)-glycerol + H2O = glycerol + (5Z,8Z,11Z,14Z)-eicosatetraenoate + H(+). It carries out the reaction 1-(5Z,8Z,11Z,14Z-eicosatetraenoyl)-glycerol + H2O = glycerol + (5Z,8Z,11Z,14Z)-eicosatetraenoate + H(+). The catalysed reaction is 1-(9Z,12Z-octadecadienoyl)-glycerol + H2O = (9Z,12Z)-octadecadienoate + glycerol + H(+). It catalyses the reaction 3-(9Z-octadecenoyl)-sn-glycero-1-phospho-(3'-(9Z-octadecenoyl)-1'-sn-glycerol) + H2O = 3-(9Z-octadecenoyl)-sn-glycero-1-phospho-(1'-sn-glycerol) + (9Z)-octadecenoate + H(+). The enzyme catalyses (S,S)-2-(9Z-octadecenoyl)-sn-glycero-1-phospho-(2'-(9Z-octadecenoyl)-1'-sn-glycerol) + H2O = (S,S)-2-(9Z-octadecenoyl)-sn-glycero-1-phospho-(1'-sn-glycerol) + (9Z)-octadecenoate + H(+). It carries out the reaction (R,R)-2-(9Z-octadecenoyl)-sn-glycero-3-phospho-(2'-(9Z-octadecenoyl)-3'-sn-glycerol) + H2O = (R,R)-2-(9Z-octadecenoyl)-sn-glycero-3-phospho-(3'-sn-glycerol) + (9Z)-octadecenoate + H(+). Lipase that preferentially hydrolysis medium-chain saturated monoacylglycerols including 2-arachidonoylglycerol. Through 2-arachidonoylglycerol degradation may regulate endocannabinoid signaling pathways. Also has a lysophosphatidyl lipase activity with a preference for lysophosphatidylglycerol among other lysophospholipids. Also able to degrade bis(monoacylglycero)phosphate (BMP) and constitutes the major enzyme for BMP catabolism. BMP, also known as lysobisphosphatidic acid, is enriched in late endosomes and lysosomes and plays a key role in the formation of intraluminal vesicles and in lipid sorting. The polypeptide is Monoacylglycerol lipase abhd6-A (abhd6-a) (Xenopus laevis (African clawed frog)).